Reading from the N-terminus, the 522-residue chain is Maturase K (522 aa).

It belongs to the intron maturase 2 family. MatK subfamily.

It is found in the plastid. The protein localises to the chloroplast. Its function is as follows. Usually encoded in the trnK tRNA gene intron. Probably assists in splicing its own and other chloroplast group II introns. The sequence is that of Maturase K from Aristea glauca.